A 458-amino-acid chain; its full sequence is Protochlorophyllide reductase, chloroplastic (458 aa).

This sequence belongs to the short-chain dehydrogenases/reductases (SDR) family. POR subfamily.

The protein localises to the plastid. It localises to the chloroplast. The enzyme catalyses chlorophyllide a + NADP(+) = protochlorophyllide a + NADPH + H(+). It functions in the pathway porphyrin-containing compound metabolism; chlorophyll biosynthesis. Its function is as follows. Phototransformation of protochlorophyllide (Pchlide) to chlorophyllide (Chlide). The sequence is that of Protochlorophyllide reductase, chloroplastic (PORA) from Marchantia paleacea (Liverwort).